The chain runs to 155 residues: uncharacterized protein (155 aa).

The next 5 helical transmembrane spans lie at Ile4–Leu24, Ala46–Tyr66, Phe77–Thr97, Leu101–Ile121, and Ser130–Ile150.

This sequence belongs to the TspO/BZRP family.

The protein resides in the cell membrane. This is an uncharacterized protein from Bacillus subtilis (strain 168).